The sequence spans 152 residues: Ribonuclease H (152 aa).

The RNase H type-1 domain occupies 6-147 (KKNNVIAYTD…ADELANKAIA (142 aa)). Aspartate 15, glutamate 53, aspartate 75, and aspartate 139 together coordinate Mg(2+).

The protein belongs to the RNase H family. As to quaternary structure, monomer. Mg(2+) serves as cofactor.

The protein localises to the cytoplasm. The enzyme catalyses Endonucleolytic cleavage to 5'-phosphomonoester.. Endonuclease that specifically degrades the RNA of RNA-DNA hybrids. The protein is Ribonuclease H of Francisella philomiragia subsp. philomiragia (strain ATCC 25017 / CCUG 19701 / FSC 153 / O#319-036).